We begin with the raw amino-acid sequence, 167 residues long: MQRVTSYLPAGTPSSNPIDRVELPHDLRHLRRKLLHLENGEMVMLDLKEPVLFANGDLLVREDGELIEIVAAPEKLFEIKPRNRLHLIELAWHLGNRHLSAQIEEERILILRDHVIRAMLEGLGATVTEVSEPFQPARGAYHAHGGHSHGHDHGHSHGHDHHDHSHD.

The tract at residues 137 to 167 (ARGAYHAHGGHSHGHDHGHSHGHDHHDHSHD) is disordered. Positions 149–167 (HGHDHGHSHGHDHHDHSHD) are enriched in basic and acidic residues.

The protein belongs to the UreE family.

The protein resides in the cytoplasm. Functionally, involved in urease metallocenter assembly. Binds nickel. Probably functions as a nickel donor during metallocenter assembly. The sequence is that of Urease accessory protein UreE from Rhizobium rhizogenes (strain K84 / ATCC BAA-868) (Agrobacterium radiobacter).